Consider the following 312-residue polypeptide: uncharacterized protein (312 aa).

It belongs to the asfivirus CP312R family.

Its subcellular location is the virion. This is an uncharacterized protein from African swine fever virus (isolate Tick/Malawi/Lil 20-1/1983) (ASFV).